The following is a 360-amino-acid chain: Phosphoserine aminotransferase (360 aa).

Position 41 (Arg41) interacts with L-glutamate. Pyridoxal 5'-phosphate-binding residues include Trp101, Thr152, Asp172, and Gln195. Lys196 bears the N6-(pyridoxal phosphate)lysine mark. 237-238 is a pyridoxal 5'-phosphate binding site; sequence NT.

It belongs to the class-V pyridoxal-phosphate-dependent aminotransferase family. SerC subfamily. Homodimer. Pyridoxal 5'-phosphate is required as a cofactor.

It is found in the cytoplasm. The enzyme catalyses O-phospho-L-serine + 2-oxoglutarate = 3-phosphooxypyruvate + L-glutamate. The catalysed reaction is 4-(phosphooxy)-L-threonine + 2-oxoglutarate = (R)-3-hydroxy-2-oxo-4-phosphooxybutanoate + L-glutamate. It participates in amino-acid biosynthesis; L-serine biosynthesis; L-serine from 3-phospho-D-glycerate: step 2/3. It functions in the pathway cofactor biosynthesis; pyridoxine 5'-phosphate biosynthesis; pyridoxine 5'-phosphate from D-erythrose 4-phosphate: step 3/5. Functionally, catalyzes the reversible conversion of 3-phosphohydroxypyruvate to phosphoserine and of 3-hydroxy-2-oxo-4-phosphonooxybutanoate to phosphohydroxythreonine. The chain is Phosphoserine aminotransferase from Burkholderia orbicola (strain MC0-3).